A 64-amino-acid chain; its full sequence is Large ribosomal subunit protein bL35 (64 aa).

Positions 1 to 44 (MSKIKSHSGAAKRFKRTANGFKHKQSHTSHILTKKSTKRKRHLR) are enriched in basic residues. The interval 1–48 (MSKIKSHSGAAKRFKRTANGFKHKQSHTSHILTKKSTKRKRHLRSMNQ) is disordered.

This sequence belongs to the bacterial ribosomal protein bL35 family.

This chain is Large ribosomal subunit protein bL35, found in Marinomonas sp. (strain MWYL1).